We begin with the raw amino-acid sequence, 966 residues long: Leucine--tRNA ligase (966 aa).

The 'HIGH' region signature appears at 71–82 (PYPSGAGLHVGH). A disordered region spans residues 561 to 580 (YSPRTFDPDDADTKPETPLS). A compositionally biased stretch (basic and acidic residues) spans 571-580 (ADTKPETPLS). The short motif at 734–738 (KMGKS) is the 'KMSKS' region element. ATP is bound at residue K737.

The protein belongs to the class-I aminoacyl-tRNA synthetase family.

The protein localises to the cytoplasm. The enzyme catalyses tRNA(Leu) + L-leucine + ATP = L-leucyl-tRNA(Leu) + AMP + diphosphate. This Streptomyces coelicolor (strain ATCC BAA-471 / A3(2) / M145) protein is Leucine--tRNA ligase.